A 180-amino-acid chain; its full sequence is Large ribosomal subunit protein uL5 (180 aa).

This sequence belongs to the universal ribosomal protein uL5 family. In terms of assembly, part of the 50S ribosomal subunit; part of the 5S rRNA/L5/L18/L25 subcomplex. Contacts the 5S rRNA and the P site tRNA. Forms a bridge to the 30S subunit in the 70S ribosome.

In terms of biological role, this is one of the proteins that bind and probably mediate the attachment of the 5S RNA into the large ribosomal subunit, where it forms part of the central protuberance. In the 70S ribosome it contacts protein S13 of the 30S subunit (bridge B1b), connecting the 2 subunits; this bridge is implicated in subunit movement. Contacts the P site tRNA; the 5S rRNA and some of its associated proteins might help stabilize positioning of ribosome-bound tRNAs. This is Large ribosomal subunit protein uL5 from Streptococcus suis (strain 05ZYH33).